The primary structure comprises 415 residues: MAVHNLKDLLAEGVSGRGVLVRSDLNVPLDSDGEQGRITDPGRITASVPTLSALVEAGAKVVVAAHLGRPKNGPDPALSLAPVAAALGEQLGRHVQLASDVVGTDALARAEGLTDGDVLLLENIRFDARETSKDDAERLALARQLAELVGPTGAFVSDGFGVVHRKQASVYDVATLLPHYAGTLVAEEIAVLEQLTGSTKRPYAVVLGGSKVSDKLGVIESLATKADSIVIGGGMCFTFLAAQGFSVGKSLLETEMVDTCRRLLDTYVDVLRLPVDIVAADRFAADAAPQTVPADAIPDDLMGLDIGPGSVKRFTALLSNAETIFWNGPMGVFEFPAFAAGTKGLAEAIAAATGKGAFSVVGGGDSAAAVRALGIPESGFSHISTGGGASLEYLEGKALPGIEVLGRPQPTGGAA.

Residues Asp-24–Asn-26, Arg-43, His-66–Arg-69, Arg-125, and Arg-165 each bind substrate. ATP-binding positions include Lys-215, Gly-303, Glu-334, and Gly-363–Ser-366.

It belongs to the phosphoglycerate kinase family. As to quaternary structure, monomer.

It localises to the cytoplasm. It catalyses the reaction (2R)-3-phosphoglycerate + ATP = (2R)-3-phospho-glyceroyl phosphate + ADP. Its pathway is carbohydrate degradation; glycolysis; pyruvate from D-glyceraldehyde 3-phosphate: step 2/5. This chain is Phosphoglycerate kinase, found in Mycobacterium avium (strain 104).